Consider the following 507-residue polypeptide: Cuticlin-4 (507 aa).

A signal peptide spans 1 to 19 (MFHFTRILAAFLLPTLCFC). The Extracellular segment spans residues 20–471 (GYSTAPSSTV…KTCFSTSRMY (452 aa)). One can recognise a ZP domain in the interval 42-280 (VCETASISLL…YGCSNTQPQC (239 aa)). Positions 292–350 (KTTETAEPYPYDSHESGYPTRPANYPVASSRYPIPTTQAPASYPSSPAPPPPGADIDNG) are disordered. N-linked (GlcNAc...) asparagine glycosylation is found at N374 and N408. The helical transmembrane segment at 472–492 (FTLILLCLLFATTVVVFIVIV) threads the bilayer. The Cytoplasmic segment spans residues 493-507 (QKQRQILAQTAFFKP).

The protein localises to the cell membrane. Plays a role in alae formation and subsequent cuticle attachment in adults. This is Cuticlin-4 from Caenorhabditis elegans.